Here is a 5141-residue protein sequence, read N- to C-terminus: SCO-spondin (5141 aa).

The N-terminal stretch at 1–17 (MLLPALLFGMLWAPANG) is a signal peptide. The EMI domain maps to 18–102 (HWCEQIETVH…ACCPGWGGIH (85 aa)). Residues N88, N130, N150, and N167 are each glycosylated (N-linked (GlcNAc...) asparagine). One can recognise a VWFD 1 domain in the interval 193–364 (ATCATWSGFH…RLPGYEPGCL (172 aa)). Disulfide bonds link C195–C325, C217–C363, and C239–C245. Residues 472-527 (CPGGQLYSDCISSCPPSCSAVAQGEEGSCGKECVSGCECPTGLFWDGALCVPAAHC) form the TIL 1 domain. A VWFD 2 domain is found at 565–738 (AECAVGGDGH…FQVSGDGRCP (174 aa)). 2 disulfides stabilise this stretch: C567/C700 and C591/C737. 2 N-linked (GlcNAc...) asparagine glycosylation sites follow: N657 and N822. The TIL 2 domain maps to 830-883 (CPGGQVYQECAPACGHYCGEPEDCKELGSCVAGCNCPPGLLWDLEGQCVPPSMC). N-linked (GlcNAc...) asparagine glycosylation is found at N895, N949, and N991. In terms of domain architecture, VWFD 3 spans 1017–1187 (GWCQASGAPH…HSWRLNPLCP (171 aa)). Disulfide bonds link C1019/C1151, C1041/C1186, and C1062/C1069. Residues 1280–1336 (CEGGQVYEPCGSTCPPTCHDHHPELRWHCQAITCVEGCFCPEGTLLHGGTCVELTDC) form the TIL 3 domain. N1357 carries an N-linked (GlcNAc...) asparagine glycan. LDL-receptor class A domains follow at residues 1380 to 1417 (GCAEGEALCRESGHCVPLEWLCDNQDDCGDGSDEEGCD), 1420 to 1456 (VCGEGQMSCQSGRCLPLSLICDGQDDCGDGTDEQGCL), 1456 to 1492 (LCPQGFLACADGRCLPPALLCDGHPDCLDAADEESCL), and 1496 to 1534 (SCTSGEVSCVDGPCIRTIQLCDGVWDCPDGADEGPVHCS). 12 disulfides stabilise this stretch: C1381/C1394, C1388/C1407, C1401/C1416, C1421/C1433, C1428/C1446, C1440/C1455, C1457/C1469, C1464/C1482, C1476/C1491, C1497/C1509, C1504/C1522, and C1516/C1533. The segment at 1533–1567 (CSSPSLPTPPAGIGQNPSTSSPDTSPSPVGSASPA) is disordered. Positions 1549–1567 (PSTSSPDTSPSPVGSASPA) are enriched in low complexity. LDL-receptor class A domains follow at residues 1569–1605 (PCSLSEFQCNSGECTPRGWRCDREEDCTDGSDELDCG) and 1607–1646 (PCKLYQMPCAHGPHCLSPGQLCDGVAQCPDGSDEDPDVCE). Intrachain disulfides connect C1570/C1582, C1577/C1595, C1589/C1604, C1608/C1621, C1615/C1634, and C1628/C1645. N-linked (GlcNAc...) asparagine glycosylation is found at N1655 and N1668. Residues 1660–1700 (PCPEFSCPNGTCIDFLLVCDGSPDCELADETEPSLDEQGCG) form the LDL-receptor class A 7 domain. 9 disulfides stabilise this stretch: C1661-C1671, C1666-C1684, C1678-C1699, C1711-C1747, C1715-C1752, C1726-C1737, C1767-C1964, C1771-C1969, and C1781-C1791. 2 TSP type-1 domains span residues 1699-1753 (CGTW…EACP) and 1755-1970 (DGEW…EPCE). N1725 carries an N-linked (GlcNAc...) asparagine glycan. N-linked (GlcNAc...) asparagine glycosylation occurs at N1814. 2 consecutive EGF-like domains span residues 1829–1868 (CPLTCDDISGEAVCSPDRPCSSPGCWCPEGKVLGTEGRCV) and 1869–1895 (RPRQCPCLVDGIRYWPGQRIKMDCQLC). The 61-residue stretch at 1970–2030 (EGCEQWGLTY…GMGESCCHCA (61 aa)) folds into the VWFC 1 domain. An N-linked (GlcNAc...) asparagine glycan is attached at N2035. Intrachain disulfides connect C2070-C2226, C2236-C2248, C2243-C2261, and C2255-C2270. Residues 2070-2226 (CYSPLGLAGL…IFLWVELLGC (157 aa)) form the F5/8 type C domain. Positions 2087-2109 (PLEHSTRAAPVEAPTAGPGPRED) are disordered. N-linked (GlcNAc...) asparagine glycans are attached at residues N2130 and N2148. Positions 2235-2271 (LCPGTRHRCANGDCALKGGPCDGAVDCEDGSDEEGCG) constitute an LDL-receptor class A 8 domain. The interval 2262 to 2335 (EDGSDEEGCG…SPSASEGLLP (74 aa)) is disordered. Positions 2276-2294 (STASRVHSTARTPALSPTQ) are enriched in polar residues. The segment covering 2301 to 2314 (HPREGLADMEHQQP) has biased composition (basic and acidic residues). LDL-receptor class A domains lie at 2391-2427 (RCGPGQVPCDVLGCVEQEQLCDGREDCLDGSDEQHCA) and 2448-2484 (LCSPSQLSCGSGECLPLEHRCDLQVNCQDGSDEDDCV). 12 disulfides stabilise this stretch: C2392-C2404, C2399-C2417, C2411-C2426, C2449-C2461, C2456-C2474, C2468-C2483, C2486-C2522, C2497-C2501, C2532-C2537, C2552-C2589, C2556-C2594, and C2567-C2579. 2 consecutive TSP type-1 domains span residues 2485–2538 (DCVL…QACP) and 2540–2595 (AGAW…QLCP). The 43-residue stretch at 2618–2660 (PPCPPSCLDPEANRSCSGHCVEGCRCPPGLFLQDSHCLPLSEC) folds into the TIL 4 domain. N2630 and N2679 each carry an N-linked (GlcNAc...) asparagine glycan. TSP type-1 domains follow at residues 2700–2754 (SCGW…TDCG), 2758–2813 (PGWT…SLCP), and 2815–2868 (PSAW…HPCT). 9 disulfide bridges follow: C2701/C2739, C2712/C2716, C2749/C2753, C2769/C2807, C2773/C2812, C2789/C2797, C2827/C2862, C2831/C2867, and C2842/C2852. N2921 and N2951 each carry an N-linked (GlcNAc...) asparagine glycan. 2 consecutive TSP type-1 domains span residues 2969–3024 (ACGW…RPCQ) and 3025–3068 (GPGA…QPCA). Cystine bridges form between C2970–C3008, C2981–C2985, and C3018–C3023. N3046, N3101, N3148, and N3158 each carry an N-linked (GlcNAc...) asparagine glycan. The region spanning 3075–3127 (CPKDQQWLDCAQGPASCAHLSTPREANQTCHPGCYCLSGMLLLNNVCVPAQDC) is the TIL 5 domain. 2 consecutive TSP type-1 domains span residues 3168–3235 (QPAW…PGCN) and 3237–3292 (AGVW…QPCP). 6 cysteine pairs are disulfide-bonded: C3180–C3229, C3184–C3234, C3195–C3219, C3249–C3286, C3253–C3291, and C3264–C3276. N-linked (GlcNAc...) asparagine glycosylation occurs at N3295. The TIL 6 domain occupies 3300–3350 (EGAEYSPCGPPCPRSCDDLVHCMWHCQPGCYCPPGKVLSADGAICVQPHHC). Residue N3384 is glycosylated (N-linked (GlcNAc...) asparagine). TSP type-1 domains lie at 3393–3455 (SGDW…TACP) and 3457–3512 (DGAW…TPCT). Intrachain disulfides connect C3405–C3448, C3409–C3454, C3420–C3432, C3469–C3504, C3472–C3511, and C3482–C3494. A glycan (N-linked (GlcNAc...) asparagine) is linked at N3506. In terms of domain architecture, TIL 7 spans 3514-3570 (CGGGQDLLPCGQPCPHSCQDLSLGSTCQPGSSGCQSGCGCPPGQLSQDGLCVFPADC). N-linked (GlcNAc...) asparagine glycosylation is found at N3584 and N3611. Residues 3630 to 3678 (PGIWSSWGPWEKCSVPCGGGEQLRSRQCARPPCPGLAQQSRTCHIHVCR) form the TSP type-1 14 domain. Disulfide bonds link C3642–C3672, C3646–C3677, and C3657–C3662. Residue N3787 is glycosylated (N-linked (GlcNAc...) asparagine). TSP type-1 domains follow at residues 3806-3862 (RGYF…PECP), 3876-3928 (AGGW…PSCT), 3942-3998 (NCFW…RACP), and 4000-4055 (PGGW…MPCE). 3 cysteine pairs are disulfide-bonded: C3818-C3856, C3822-C3861, and C3834-C3846. N-linked (GlcNAc...) asparagine glycosylation is present at N3910. Cystine bridges form between C3943/C3979, C3954/C3958, C3992/C3997, C4012/C4049, C4016/C4054, and C4027/C4039. The TIL 8 domain occupies 4058–4113 (CPAGMEMVSCANRCPYSCSDLQEAVMCQEDQACQLGCRCSEGFLEQDGGCVPVGHC). N4135 carries an N-linked (GlcNAc...) asparagine glycan. TSP type-1 domains lie at 4155–4208 (HCAW…DPCP), 4249–4304 (PGGW…QLCL), 4306–4362 (LLEI…GPCQ), and 4364–4418 (DCMW…GNCS). Disulfide bonds link C4156-C4192, C4167-C4171, C4202-C4207, C4261-C4298, C4265-C4303, and C4276-C4288. The N-linked (GlcNAc...) asparagine glycan is linked to N4345. Disulfide bonds link C4365–C4402, C4376–C4378, and C4412–C4417. A glycan (N-linked (GlcNAc...) asparagine) is linked at N4416. Residues 4422–4477 (CLPPFEFQSCGSPCAGLCATHLSHQLCQDLPPCQPGCYCPMGLLEQDGGCILPEQC) form the TIL 9 domain. N4557 carries an N-linked (GlcNAc...) asparagine glycan. The region spanning 4608-4659 (TCQWGPWGPWSPCQVPCSGGFKLRWREASDNSVGECRGPWAQTESCNMGSCP) is the TSP type-1 23 domain. 3 disulfides stabilise this stretch: C4609-C4643, C4620-C4624, and C4653-C4658. The TIL 10 domain occupies 4673–4719 (DCANQCPRSCADLWEGVQCLQGPCSPGCRCPPGQLVQDGHCVPISSC). N-linked (GlcNAc...) asparagine glycans are attached at residues N4727, N4744, and N4749. The 54-residue stretch at 4759-4812 (CPVLGPWSPWSECSAVCGGGTMVRYRSCEEHPDSAPCQALDMEQRVECNLQTCP) folds into the TSP type-1 24 domain. Intrachain disulfides connect C4771-C4806, C4775-C4811, and C4786-C4795. In terms of domain architecture, TIL 11 spans 4814–4868 (CPPGQVLSTCATLCPSFCSHLWPGTICVREPCQLGCGCPGGQLLHSGTCIPPEAC). N4899, N4942, and N4949 each carry an N-linked (GlcNAc...) asparagine glycan. Positions 4920–4978 (CPPGEILQLGELRPCEKTCLEMNKTQAWSNCTEAQVPGCVCQLGHFRSHTGLCVPEDHC) constitute a TIL 12 domain. Positions 4978-5036 (CECWHHGSPHLPGSEWQEACESCRCLHGKSVCTQHCPELSCAQGEVVVQEPGSCCPICQ) constitute a VWFC 2 domain. Cystine bridges form between C5047-C5095, C5061-C5112, C5071-C5128, and C5075-C5130. The region spanning 5047 to 5134 (CRHLTELRNL…IHNCHCSACQ (88 aa)) is the CTCK domain. An N-linked (GlcNAc...) asparagine glycan is attached at N5055.

Belongs to the thrombospondin family.

It is found in the secreted. The protein localises to the extracellular space. Functionally, involved in the modulation of neuronal aggregation. May be involved in developmental events during the formation of the central nervous system. The sequence is that of SCO-spondin from Rattus norvegicus (Rat).